A 102-amino-acid polypeptide reads, in one-letter code: Large ribosomal subunit protein bL21 (102 aa).

Belongs to the bacterial ribosomal protein bL21 family. Part of the 50S ribosomal subunit. Contacts protein L20.

Functionally, this protein binds to 23S rRNA in the presence of protein L20. The polypeptide is Large ribosomal subunit protein bL21 (Photorhabdus laumondii subsp. laumondii (strain DSM 15139 / CIP 105565 / TT01) (Photorhabdus luminescens subsp. laumondii)).